The chain runs to 278 residues: Dehydrogenase/reductase SDR family member 4 (278 aa).

36–60 (LVTASTDGIGFAIARRLAQDGAHVV) provides a ligand contact to NADP(+). K92 carries the post-translational modification N6-acetyllysine; alternate. At K92 the chain carries N6-succinyllysine; alternate. The residue at position 105 (K105) is an N6-acetyllysine. The residue at position 140 (I140) is a Phosphoserine. S169 contacts substrate. Y182 (proton acceptor) is an active-site residue. K186 serves as a coordination point for NADP(+). An N6-acetyllysine; alternate modification is found at K216. K216 bears the N6-succinyllysine; alternate mark. The residue at position 220 (S220) is a Phosphoserine. N6-succinyllysine occurs at positions 227 and 234. Residues 276–278 (SRL) carry the Peroxisomal targeting signal motif.

The protein belongs to the short-chain dehydrogenases/reductases (SDR) family. In terms of assembly, homotetramer. In terms of tissue distribution, predominantly expressed in normal cervix (at protein level). As to expression, expressed in some neoplastic cervical tissues, but not in normal cervix (at protein level). Expressed in a few neoplastic cervical tissues. In terms of tissue distribution, high expression in liver.

It localises to the peroxisome. It is found in the nucleus. The catalysed reaction is a secondary alcohol + NADP(+) = a ketone + NADPH + H(+). It catalyses the reaction 3beta-hydroxy-5beta-pregnane-20-one + NADP(+) = 5beta-pregnan-3,20-dione + NADPH + H(+). The enzyme catalyses 5beta-dihydrotestosterone + NADPH + H(+) = 5beta-androstane-3beta,17beta-diol + NADP(+). It carries out the reaction 5beta-androstane-3,17-dione + NADPH + H(+) = 3beta-hydroxy-5beta-androstane-17-one + NADP(+). The catalysed reaction is isatin + NADPH + H(+) = 3-hydroxyindolin-2-one + NADP(+). It catalyses the reaction lithocholate + NADP(+) = 3-oxo-5beta-cholan-24-oate + NADPH + H(+). The enzyme catalyses 3-oxo-5beta-cholan-24-oate + NADPH + H(+) = isolithocholate + NADP(+). Inhibited by flavonoids (quercetin and genistein), cetylpyridium chloride, phenylhexane and valproic acid. Low inhibition is observed with fatty acids (myristic acid and lauric acid). No significant inhibition is observed with barbital, dicumarol, indomethacin, metyrapone, ethacrynic acid, disulfiram, hexestrol and benzodiazepines (diazepam and nitrazepam). Its function is as follows. NADPH-dependent oxidoreductase which catalyzes the reduction of a variety of compounds bearing carbonyl groups including ketosteroids, alpha-dicarbonyl compounds, aldehydes, aromatic ketones and quinones. Reduces 3-ketosteroids and benzil into 3beta-hydroxysteroids and R-benzoin, respectively, in contrast to the stereoselectivity of non-primate DHRS4s which produce 3alpha-hydroxysteroids and S-benzoin. Diplays low activity toward all-trans-retinal and no activity toward 9-cis-retinal as compared to non-primate mammals. In the reverse reaction, catalyze the NAD-dependent oxidation of 3beta-hydroxysteroids and alcohol, but with much lower efficiency. Involved in the metabolism of 3beta-hydroxysteroids, isatin and xenobiotic carbonyl compounds. No detected catalytic activity in vitro, possibly due to the lack of catalytic site. Functionally, NADPH-dependent oxidoreductase which catalyzes the reduction of a variety of compounds bearing carbonyl groups including ketosteroids, alpha-dicarbonyl compounds, aldehydes, aromatic ketones and quinones. Involved in the metabolism of 3beta-hydroxysteroids, isatin and xenobiotic carbonyl compounds. Has a higher catalytic activity for xenobiotic alpha-dicarbonyl compounds, sucha as benzil, than isoform 1 and is involved in benzil detoxification. In Homo sapiens (Human), this protein is Dehydrogenase/reductase SDR family member 4.